The following is a 286-amino-acid chain: Phosphatidylglycerol--prolipoprotein diacylglyceryl transferase (286 aa).

A run of 7 helical transmembrane segments spans residues 24–44 (IGPLAVHWYGVGYIVGILFAW), 72–92 (FIVWAAIGVVLGGRTGYVLFY), 104–124 (IFAVWQGGMSFHGGLLGVILA), 140–160 (FDVVAAGVPVGLGLVRVANFI), 190–210 (LYEALLEGLVLFVVLRILTHS), 218–238 (RFVGGAFICGYGLSRIFVEFF), and 253–273 (WLTMGMILSTPMVLAGIWAMA). Position 155 (Arg-155) interacts with a 1,2-diacyl-sn-glycero-3-phospho-(1'-sn-glycerol).

This sequence belongs to the Lgt family.

It localises to the cell inner membrane. The catalysed reaction is L-cysteinyl-[prolipoprotein] + a 1,2-diacyl-sn-glycero-3-phospho-(1'-sn-glycerol) = an S-1,2-diacyl-sn-glyceryl-L-cysteinyl-[prolipoprotein] + sn-glycerol 1-phosphate + H(+). It participates in protein modification; lipoprotein biosynthesis (diacylglyceryl transfer). Catalyzes the transfer of the diacylglyceryl group from phosphatidylglycerol to the sulfhydryl group of the N-terminal cysteine of a prolipoprotein, the first step in the formation of mature lipoproteins. This is Phosphatidylglycerol--prolipoprotein diacylglyceryl transferase from Mesorhizobium japonicum (strain LMG 29417 / CECT 9101 / MAFF 303099) (Mesorhizobium loti (strain MAFF 303099)).